The primary structure comprises 467 residues: Glutamate--tRNA ligase (467 aa).

Residues 9 to 19 (PSPTGYLHIGG) carry the 'HIGH' region motif. A 'KMSKS' region motif is present at residues 237-241 (KLSKR). Lys240 contacts ATP.

It belongs to the class-I aminoacyl-tRNA synthetase family. Glutamate--tRNA ligase type 1 subfamily. Monomer.

It localises to the cytoplasm. The catalysed reaction is tRNA(Glu) + L-glutamate + ATP = L-glutamyl-tRNA(Glu) + AMP + diphosphate. Its function is as follows. Catalyzes the attachment of glutamate to tRNA(Glu) in a two-step reaction: glutamate is first activated by ATP to form Glu-AMP and then transferred to the acceptor end of tRNA(Glu). The protein is Glutamate--tRNA ligase of Xanthomonas campestris pv. campestris (strain B100).